Consider the following 61-residue polypeptide: Small ribosomal subunit protein uS14 (61 aa).

4 residues coordinate Zn(2+): Cys24, Cys27, Cys40, and Cys43.

Belongs to the universal ribosomal protein uS14 family. Zinc-binding uS14 subfamily. As to quaternary structure, part of the 30S ribosomal subunit. Contacts proteins S3 and S10. It depends on Zn(2+) as a cofactor.

Binds 16S rRNA, required for the assembly of 30S particles and may also be responsible for determining the conformation of the 16S rRNA at the A site. The sequence is that of Small ribosomal subunit protein uS14 from Parafrankia sp. (strain EAN1pec).